The primary structure comprises 90 residues: Probable Fe(2+)-trafficking protein (90 aa).

It belongs to the Fe(2+)-trafficking protein family.

Could be a mediator in iron transactions between iron acquisition and iron-requiring processes, such as synthesis and/or repair of Fe-S clusters in biosynthetic enzymes. The polypeptide is Probable Fe(2+)-trafficking protein (Xylella fastidiosa (strain 9a5c)).